Consider the following 463-residue polypeptide: Glutamate--tRNA ligase 1 (463 aa).

Residues 10 to 20 carry the 'HIGH' region motif; sequence PSPTGFLHIGS. The 'KMSKS' region signature appears at 239–243; that stretch reads KLSKR. An ATP-binding site is contributed by Lys-242.

This sequence belongs to the class-I aminoacyl-tRNA synthetase family. Glutamate--tRNA ligase type 1 subfamily. Monomer.

The protein localises to the cytoplasm. It carries out the reaction tRNA(Glu) + L-glutamate + ATP = L-glutamyl-tRNA(Glu) + AMP + diphosphate. Functionally, catalyzes the attachment of glutamate to tRNA(Glu) in a two-step reaction: glutamate is first activated by ATP to form Glu-AMP and then transferred to the acceptor end of tRNA(Glu). The polypeptide is Glutamate--tRNA ligase 1 (Rickettsia canadensis (strain McKiel)).